An 89-amino-acid polypeptide reads, in one-letter code: UPF0147 protein YN1551_1489 (89 aa).

This sequence belongs to the UPF0147 family.

The protein is UPF0147 protein YN1551_1489 of Saccharolobus islandicus (strain Y.N.15.51 / Yellowstone #2) (Sulfolobus islandicus).